The chain runs to 308 residues: Olfactory receptor 2D2 (308 aa).

The Extracellular portion of the chain corresponds to 1 to 25 (MRQINQTQVTEFLLLGLSDGPHTEQ). N-linked (GlcNAc...) asparagine glycosylation occurs at N5. The chain crosses the membrane as a helical span at residues 26-49 (LLFIVLLGVYLVTVLGNLLLISLV). Residues 50 to 57 (HVDSQLHT) are Cytoplasmic-facing. A helical transmembrane segment spans residues 58-79 (PMYFFLCNLSLADLCFSTNIVP). At 80-100 (QALVHLLSRKKVIAFTLCAAR) the chain is on the extracellular side. Residues 101–120 (LLFFLIFGCTQCALLAVMSY) traverse the membrane as a helical segment. Residues 121–139 (DRYVAICNPLRYPNIMTWK) are Cytoplasmic-facing. A helical membrane pass occupies residues 140–158 (VCVQLATGSWTSGILVSVV). Residues 159–195 (DTTFILRLPYRGSNSIAHFFCEAPALLILASTDTHAS) lie on the Extracellular side of the membrane. The helical transmembrane segment at 196-219 (EMAIFLMGVVILLIPVFLILVSYG) threads the bilayer. At 220 to 236 (RIIVTVVKMKSTVGSLK) the chain is on the cytoplasmic side. Residues 237–259 (AFSTCGSHLMVVILFYGSAIITY) form a helical membrane-spanning segment. The Extracellular segment spans residues 260–270 (MTPKSSKQQEK). A helical membrane pass occupies residues 271-290 (SVSVFYAIVTPMLNPLIYSL). The Cytoplasmic segment spans residues 291–308 (RNKDVKAALRKVATRNFP).

It belongs to the G-protein coupled receptor 1 family.

Its subcellular location is the cell membrane. Its function is as follows. Odorant receptor. The polypeptide is Olfactory receptor 2D2 (OR2D2) (Homo sapiens (Human)).